Here is a 290-residue protein sequence, read N- to C-terminus: Shikimate dehydrogenase (NADP(+)) (290 aa).

Shikimate-binding positions include 20 to 22 and threonine 67; that span reads SLS. Lysine 71 (proton acceptor) is an active-site residue. Asparagine 92 and aspartate 107 together coordinate shikimate. NADP(+) contacts are provided by residues 132–136 and methionine 228; that span reads GAGGA. Tyrosine 230 serves as a coordination point for shikimate. NADP(+) is bound at residue glycine 251.

The protein belongs to the shikimate dehydrogenase family. As to quaternary structure, homodimer.

It catalyses the reaction shikimate + NADP(+) = 3-dehydroshikimate + NADPH + H(+). Its pathway is metabolic intermediate biosynthesis; chorismate biosynthesis; chorismate from D-erythrose 4-phosphate and phosphoenolpyruvate: step 4/7. Its function is as follows. Involved in the biosynthesis of the chorismate, which leads to the biosynthesis of aromatic amino acids. Catalyzes the reversible NADPH linked reduction of 3-dehydroshikimate (DHSA) to yield shikimate (SA). This Citrifermentans bemidjiense (strain ATCC BAA-1014 / DSM 16622 / JCM 12645 / Bem) (Geobacter bemidjiensis) protein is Shikimate dehydrogenase (NADP(+)).